The following is a 458-amino-acid chain: Argininosuccinate lyase (458 aa).

It belongs to the lyase 1 family. Argininosuccinate lyase subfamily.

It is found in the cytoplasm. The catalysed reaction is 2-(N(omega)-L-arginino)succinate = fumarate + L-arginine. It participates in amino-acid biosynthesis; L-arginine biosynthesis; L-arginine from L-ornithine and carbamoyl phosphate: step 3/3. The protein is Argininosuccinate lyase of Anoxybacillus flavithermus (strain DSM 21510 / WK1).